The primary structure comprises 240 residues: Urease accessory protein UreD (240 aa).

It belongs to the UreD family. As to quaternary structure, ureD, UreF and UreG form a complex that acts as a GTP-hydrolysis-dependent molecular chaperone, activating the urease apoprotein by helping to assemble the nickel containing metallocenter of UreC. The UreE protein probably delivers the nickel.

The protein resides in the cytoplasm. In terms of biological role, required for maturation of urease via the functional incorporation of the urease nickel metallocenter. This chain is Urease accessory protein UreD, found in Granulibacter bethesdensis (strain ATCC BAA-1260 / CGDNIH1).